The sequence spans 315 residues: Porphobilinogen deaminase (315 aa).

Position 242 is an S-(dipyrrolylmethanemethyl)cysteine (Cys-242).

Belongs to the HMBS family. In terms of assembly, monomer. Dipyrromethane is required as a cofactor.

It catalyses the reaction 4 porphobilinogen + H2O = hydroxymethylbilane + 4 NH4(+). It participates in porphyrin-containing compound metabolism; protoporphyrin-IX biosynthesis; coproporphyrinogen-III from 5-aminolevulinate: step 2/4. Its function is as follows. Tetrapolymerization of the monopyrrole PBG into the hydroxymethylbilane pre-uroporphyrinogen in several discrete steps. The sequence is that of Porphobilinogen deaminase from Syntrophotalea carbinolica (strain DSM 2380 / NBRC 103641 / GraBd1) (Pelobacter carbinolicus).